Consider the following 162-residue polypeptide: 3-isopropylmalate dehydratase small subunit (162 aa).

Belongs to the LeuD family. LeuD type 2 subfamily. Heterodimer of LeuC and LeuD.

It catalyses the reaction (2R,3S)-3-isopropylmalate = (2S)-2-isopropylmalate. It participates in amino-acid biosynthesis; L-leucine biosynthesis; L-leucine from 3-methyl-2-oxobutanoate: step 2/4. In terms of biological role, catalyzes the isomerization between 2-isopropylmalate and 3-isopropylmalate, via the formation of 2-isopropylmaleate. The sequence is that of 3-isopropylmalate dehydratase small subunit from Pyrobaculum neutrophilum (strain DSM 2338 / JCM 9278 / NBRC 100436 / V24Sta) (Thermoproteus neutrophilus).